The chain runs to 439 residues: GTPase Der (439 aa).

2 consecutive EngA-type G domains span residues 4–168 (PIVA…KDDE) and 177–352 (INIA…DNYT). GTP is bound by residues 10–17 (GRPNVGKS), 57–61 (DTGGI), 120–123 (NKID), 183–190 (GKPNVGKS), 230–234 (DTAGL), and 295–298 (NKWD). The KH-like domain maps to 353–437 (KRVKTGVLND…GIKTEFRERK (85 aa)).

This sequence belongs to the TRAFAC class TrmE-Era-EngA-EngB-Septin-like GTPase superfamily. EngA (Der) GTPase family. As to quaternary structure, associates with the 50S ribosomal subunit.

Its function is as follows. GTPase that plays an essential role in the late steps of ribosome biogenesis. This Clostridium botulinum (strain Loch Maree / Type A3) protein is GTPase Der.